A 160-amino-acid chain; its full sequence is Dr hemagglutinin structural subunit (160 aa).

Residues 1–21 (MKKLAIMAAASMVFAVSSAHA) form the signal peptide. A receptor-binding region spans residues 22 to 75 (GFTPSGTTGTTKLTVTEECQVRVGDLTVAKTRGQLTDAAPIGPVTVQALGCDAR).

It belongs to the Dr-adhesin family.

The protein localises to the fimbrium. In terms of biological role, hemagglutinins of uropathogenic E.coli mediate adherence to the upper urinary tract. These adhesins bind to the Dr blood group antigen and also agglutinate human erythrocytes in the presence of D-mannose (mannose-resistant hemagglutination (MRHA)). The chain is Dr hemagglutinin structural subunit (draA) from Escherichia coli.